We begin with the raw amino-acid sequence, 654 residues long: Beta-galactosidase-1-like protein (654 aa).

An N-terminal signal peptide occupies residues 1 to 27; that stretch reads MAPKKPSCLRSLLLPLSLTLLLPQADT. A glycan (N-linked (GlcNAc...) asparagine) is linked at N97. The active-site Proton donor is E186. Residue N243 is glycosylated (N-linked (GlcNAc...) asparagine). The Nucleophile role is filled by E264.

Belongs to the glycosyl hydrolase 35 family.

It is found in the secreted. Probable glycosyl hydrolase. The chain is Beta-galactosidase-1-like protein (GLB1L) from Macaca fascicularis (Crab-eating macaque).